Reading from the N-terminus, the 362-residue chain is Aminomethyltransferase (362 aa).

It belongs to the GcvT family. The glycine cleavage system is composed of four proteins: P, T, L and H.

It carries out the reaction N(6)-[(R)-S(8)-aminomethyldihydrolipoyl]-L-lysyl-[protein] + (6S)-5,6,7,8-tetrahydrofolate = N(6)-[(R)-dihydrolipoyl]-L-lysyl-[protein] + (6R)-5,10-methylene-5,6,7,8-tetrahydrofolate + NH4(+). Its function is as follows. The glycine cleavage system catalyzes the degradation of glycine. This chain is Aminomethyltransferase, found in Listeria monocytogenes serotype 4b (strain F2365).